The following is a 467-amino-acid chain: Serine/threonine-protein phosphatase 2A 56 kDa regulatory subunit epsilon isoform (467 aa).

The tract at residues 1-39 is disordered; that stretch reads MSSAPTTPPSVDKVDGFSRKSVRKARQKRSQSSSQFRSQ. Serine 2 carries the N-acetylserine modification. Threonine 7 is subject to Phosphothreonine. A compositionally biased stretch (basic residues) spans 20–29; that stretch reads KSVRKARQKR. 3 positions are modified to phosphoserine: serine 30, serine 32, and serine 34. Positions 30–39 are enriched in low complexity; it reads SQSSSQFRSQ.

The protein belongs to the phosphatase 2A regulatory subunit B56 family. PP2A consists of a common heterodimeric core enzyme, composed of a 36 kDa catalytic subunit (subunit C) and a 65 kDa constant regulatory subunit (PR65 or subunit A), that associates with a variety of regulatory subunits. Proteins that associate with the core dimer include three families of regulatory subunits B (the R2/B/PR55/B55, R3/B''/PR72/PR130/PR59 and R5/B'/B56 families), the 48 kDa variable regulatory subunit, viral proteins, and cell signaling molecules. Interacts with SGO1. Found in a complex with at least ARL2, PPP2CB; PPP2R1A, PPP2R2A, PPP2R5E and TBCD.

The protein resides in the cytoplasm. Its function is as follows. The B regulatory subunit might modulate substrate selectivity and catalytic activity, and might also direct the localization of the catalytic enzyme to a particular subcellular compartment. Interacts with cyclin G in vitro. The protein is Serine/threonine-protein phosphatase 2A 56 kDa regulatory subunit epsilon isoform (Ppp2r5e) of Mus musculus (Mouse).